A 92-amino-acid chain; its full sequence is Small ribosomal subunit protein uS19 (92 aa).

It belongs to the universal ribosomal protein uS19 family.

Its function is as follows. Protein S19 forms a complex with S13 that binds strongly to the 16S ribosomal RNA. The polypeptide is Small ribosomal subunit protein uS19 (Aliivibrio salmonicida (strain LFI1238) (Vibrio salmonicida (strain LFI1238))).